Reading from the N-terminus, the 269-residue chain is Formamidopyrimidine-DNA glycosylase (269 aa).

Pro-2 serves as the catalytic Schiff-base intermediate with DNA. Glu-3 serves as the catalytic Proton donor. The active-site Proton donor; for beta-elimination activity is the Lys-57. His-90, Arg-109, and Lys-150 together coordinate DNA. The segment at 235–269 adopts an FPG-type zinc-finger fold; the sequence is QVYGRHGEPCYTCGEFIQIAKYGQRSSFFCPSCQN. Catalysis depends on Arg-259, which acts as the Proton donor; for delta-elimination activity.

The protein belongs to the FPG family. Monomer. Zn(2+) serves as cofactor.

The catalysed reaction is Hydrolysis of DNA containing ring-opened 7-methylguanine residues, releasing 2,6-diamino-4-hydroxy-5-(N-methyl)formamidopyrimidine.. It carries out the reaction 2'-deoxyribonucleotide-(2'-deoxyribose 5'-phosphate)-2'-deoxyribonucleotide-DNA = a 3'-end 2'-deoxyribonucleotide-(2,3-dehydro-2,3-deoxyribose 5'-phosphate)-DNA + a 5'-end 5'-phospho-2'-deoxyribonucleoside-DNA + H(+). Functionally, involved in base excision repair of DNA damaged by oxidation or by mutagenic agents. Acts as a DNA glycosylase that recognizes and removes damaged bases. Has a preference for oxidized purines, such as 7,8-dihydro-8-oxoguanine (8-oxoG). Has AP (apurinic/apyrimidinic) lyase activity and introduces nicks in the DNA strand. Cleaves the DNA backbone by beta-delta elimination to generate a single-strand break at the site of the removed base with both 3'- and 5'-phosphates. The chain is Formamidopyrimidine-DNA glycosylase from Baumannia cicadellinicola subsp. Homalodisca coagulata.